The following is a 336-amino-acid chain: MSIMDERLLSGESAYEDADLEYSLRPQTLRQYIGQDKAKHNLEVFIEAAKMREETLDHVLLYGPPGLGKTTLANIIANEMGVNVRTTSGPAIERPGDLAAVLTSLQPGDVLFIDEIHRLHRSIEEVLYPAMEDFCLDIVIGKGPSARSVRLDLPPFTLVGATTRAGALSAPLRDRFGVLSRLEYYTVDQLSAIVERTGEVFEVEINSLAALEIARRARGTPRIANRLLRRVRDFAQVRGNGTVTMEITQMALELLQVDKLGLDHIDHKLLLGIIEKFRGGPVGLETVSATIGEESHTIEDVYEPYLLQIGFLQRTPRGRIVTPLAYEHFGMEMPKV.

A large ATPase domain (RuvB-L) region spans residues 4 to 185; the sequence is MDERLLSGES…FGVLSRLEYY (182 aa). Residues leucine 24, arginine 25, glycine 66, lysine 69, threonine 70, threonine 71, 132–134, arginine 175, tyrosine 185, and arginine 222 each bind ATP; that span reads EDF. Threonine 70 provides a ligand contact to Mg(2+). Residues 186 to 256 are small ATPAse domain (RuvB-S); sequence TVDQLSAIVE…ITQMALELLQ (71 aa). The head domain (RuvB-H) stretch occupies residues 259 to 336; it reads KLGLDHIDHK…EHFGMEMPKV (78 aa). DNA-binding residues include arginine 314 and arginine 319.

It belongs to the RuvB family. Homohexamer. Forms an RuvA(8)-RuvB(12)-Holliday junction (HJ) complex. HJ DNA is sandwiched between 2 RuvA tetramers; dsDNA enters through RuvA and exits via RuvB. An RuvB hexamer assembles on each DNA strand where it exits the tetramer. Each RuvB hexamer is contacted by two RuvA subunits (via domain III) on 2 adjacent RuvB subunits; this complex drives branch migration. In the full resolvosome a probable DNA-RuvA(4)-RuvB(12)-RuvC(2) complex forms which resolves the HJ.

It localises to the cytoplasm. It catalyses the reaction ATP + H2O = ADP + phosphate + H(+). The RuvA-RuvB-RuvC complex processes Holliday junction (HJ) DNA during genetic recombination and DNA repair, while the RuvA-RuvB complex plays an important role in the rescue of blocked DNA replication forks via replication fork reversal (RFR). RuvA specifically binds to HJ cruciform DNA, conferring on it an open structure. The RuvB hexamer acts as an ATP-dependent pump, pulling dsDNA into and through the RuvAB complex. RuvB forms 2 homohexamers on either side of HJ DNA bound by 1 or 2 RuvA tetramers; 4 subunits per hexamer contact DNA at a time. Coordinated motions by a converter formed by DNA-disengaged RuvB subunits stimulates ATP hydrolysis and nucleotide exchange. Immobilization of the converter enables RuvB to convert the ATP-contained energy into a lever motion, pulling 2 nucleotides of DNA out of the RuvA tetramer per ATP hydrolyzed, thus driving DNA branch migration. The RuvB motors rotate together with the DNA substrate, which together with the progressing nucleotide cycle form the mechanistic basis for DNA recombination by continuous HJ branch migration. Branch migration allows RuvC to scan DNA until it finds its consensus sequence, where it cleaves and resolves cruciform DNA. The polypeptide is Holliday junction branch migration complex subunit RuvB (Bacillus thuringiensis (strain Al Hakam)).